The sequence spans 103 residues: NADH-quinone oxidoreductase subunit K (103 aa).

The next 3 helical transmembrane spans lie at 6–26 (LSHF…GIFL), 32–52 (LVLL…FVAF), and 63–83 (IFVF…LAIL).

The protein belongs to the complex I subunit 4L family. As to quaternary structure, NDH-1 is composed of 14 different subunits. Subunits NuoA, H, J, K, L, M, N constitute the membrane sector of the complex.

Its subcellular location is the cell inner membrane. It catalyses the reaction a quinone + NADH + 5 H(+)(in) = a quinol + NAD(+) + 4 H(+)(out). Functionally, NDH-1 shuttles electrons from NADH, via FMN and iron-sulfur (Fe-S) centers, to quinones in the respiratory chain. The immediate electron acceptor for the enzyme in this species is believed to be ubiquinone. Couples the redox reaction to proton translocation (for every two electrons transferred, four hydrogen ions are translocated across the cytoplasmic membrane), and thus conserves the redox energy in a proton gradient. This is NADH-quinone oxidoreductase subunit K from Dechloromonas aromatica (strain RCB).